The chain runs to 201 residues: Ras-related protein Rab-1B (201 aa).

An N-acetylmethionine modification is found at methionine 1. 13 residues coordinate GTP: serine 17, glycine 18, valine 19, glycine 20, lysine 21, serine 22, cysteine 23, tyrosine 33, threonine 34, glutamate 35, serine 36, serine 39, and threonine 40. Serine 22 provides a ligand contact to Mg(2+). A Switch 1 motif is present at residues 30-45; the sequence is DDTYTESYISTIGVDF. 2 residues coordinate Mg(2+): threonine 40 and aspartate 63. The tract at residues 64-83 is switch 2 region; required for interaction with REP1/CHM; the sequence is TAGQERGRTITSSYYRGAHG. The short motif at 65 to 80 is the Switch 2 element; sequence AGQERGRTITSSYYRG. 7 residues coordinate GTP: glycine 66, asparagine 121, lysine 122, aspartate 124, serine 151, alanine 152, and lysine 153. A disordered region spans residues 173 to 201; that stretch reads MGPGAASGGERPNLKIDSTPVKQAGGGCC. Residues cysteine 200 and cysteine 201 are each lipidated (S-geranylgeranyl cysteine). Cysteine 201 bears the Cysteine methyl ester mark.

Belongs to the small GTPase superfamily. Rab family. In terms of assembly, interacts with MICAL1 and MICAL2. Interacts (in GTP-bound form) with MICALCL, MICAL1 and MILCAL3. Interacts with GDI1; the interaction requires the GDP-bound state. Interacts with CHM/REP1; the interaction requires the GDP-bound form and is necessary for prenylation by GGTase II. Interacts with RabGAP TBC1D20. Interacts (in GDP-bound form) with lipid phosphatase MTMR6 (via GRAM domain); the interaction regulates MTMR6 recruitment to the endoplasmic reticulum-Golgi intermediate compartment. Interacts (in GDP-bound form) with lipid phosphatase MTMR7. Mg(2+) serves as cofactor. Prenylated; by GGTase II, only after interaction of the substrate with Rab escort protein 1 (REP1).

It is found in the cytoplasm. The protein resides in the membrane. Its subcellular location is the preautophagosomal structure membrane. The protein localises to the perinuclear region. It catalyses the reaction GTP + H2O = GDP + phosphate + H(+). With respect to regulation, regulated by guanine nucleotide exchange factors (GEFs) which promote the exchange of bound GDP for free GTP. Regulated by GTPase activating proteins (GAPs) including TBC1D20 which increases the GTP hydrolysis activity. Inhibited by GDP dissociation inhibitors (GDIs). Its function is as follows. The small GTPases Rab are key regulators of intracellular membrane trafficking, from the formation of transport vesicles to their fusion with membranes. Rabs cycle between an inactive GDP-bound form and an active GTP-bound form that is able to recruit to membranes different set of downstream effectors directly responsible for vesicle formation, movement, tethering and fusion. Plays a role in the initial events of the autophagic vacuole development which take place at specialized regions of the endoplasmic reticulum. Regulates vesicular transport between the endoplasmic reticulum and successive Golgi compartments. Required to modulate the compacted morphology of the Golgi. Promotes the recruitment of lipid phosphatase MTMR6 to the endoplasmic reticulum-Golgi intermediate compartment. This is Ras-related protein Rab-1B (RAB1B) from Sus scrofa (Pig).